The primary structure comprises 115 residues: NAD(P)H-quinone oxidoreductase subunit M (115 aa).

This sequence belongs to the complex I NdhM subunit family. In terms of assembly, NDH-1 can be composed of about 15 different subunits; different subcomplexes with different compositions have been identified which probably have different functions.

It is found in the cellular thylakoid membrane. The catalysed reaction is a plastoquinone + NADH + (n+1) H(+)(in) = a plastoquinol + NAD(+) + n H(+)(out). It catalyses the reaction a plastoquinone + NADPH + (n+1) H(+)(in) = a plastoquinol + NADP(+) + n H(+)(out). In terms of biological role, NDH-1 shuttles electrons from an unknown electron donor, via FMN and iron-sulfur (Fe-S) centers, to quinones in the respiratory and/or the photosynthetic chain. The immediate electron acceptor for the enzyme in this species is believed to be plastoquinone. Couples the redox reaction to proton translocation, and thus conserves the redox energy in a proton gradient. Cyanobacterial NDH-1 also plays a role in inorganic carbon-concentration. The chain is NAD(P)H-quinone oxidoreductase subunit M from Prochlorococcus marinus subsp. pastoris (strain CCMP1986 / NIES-2087 / MED4).